Consider the following 332-residue polypeptide: ATP-dependent (S)-NAD(P)H-hydrate dehydratase (332 aa).

Positions 46 to 326 (LLERARNIVP…EQIHNVFDDI (281 aa)) constitute a YjeF C-terminal domain. Residues glycine 146 and 199–205 (NAIEFCR) each bind (6S)-NADPHX. Residues 230 to 234 (KGLND) and 251 to 260 (GSGRRCGGQG) contribute to the ATP site. Aspartate 261 provides a ligand contact to (6S)-NADPHX.

Belongs to the NnrD/CARKD family. Requires Mg(2+) as cofactor.

It catalyses the reaction (6S)-NADHX + ATP = ADP + phosphate + NADH + H(+). The enzyme catalyses (6S)-NADPHX + ATP = ADP + phosphate + NADPH + H(+). In terms of biological role, catalyzes the dehydration of the S-form of NAD(P)HX at the expense of ATP, which is converted to ADP. Together with NAD(P)HX epimerase, which catalyzes the epimerization of the S- and R-forms, the enzyme allows the repair of both epimers of NAD(P)HX, a damaged form of NAD(P)H that is a result of enzymatic or heat-dependent hydration. The polypeptide is ATP-dependent (S)-NAD(P)H-hydrate dehydratase (Aedes aegypti (Yellowfever mosquito)).